A 411-amino-acid polypeptide reads, in one-letter code: Serpin A3-2 (411 aa).

An N-terminal signal peptide occupies residues methionine 1 to cysteine 24. Residues asparagine 100, asparagine 180, asparagine 230, and asparagine 264 are each glycosylated (N-linked (GlcNAc...) asparagine).

Belongs to the serpin family. In terms of assembly, homodimer.

Its subcellular location is the cytoplasmic vesicle. The protein localises to the secretory vesicle. It localises to the chromaffin granule. It is found in the secreted. Its function is as follows. Serine protease inhibitor. The sequence is that of Serpin A3-2 from Bos taurus (Bovine).